Reading from the N-terminus, the 287-residue chain is tRNA N(3)-cytidine methyltransferase METTL6 (287 aa).

7 residues coordinate S-adenosyl-L-methionine: Trp-45, Tyr-49, Gly-87, Asp-110, Asp-136, Leu-137, and Ile-157. The tract at residues 267-287 is disordered; sequence RKPPKDPAPTTDSASLLRKEF.

This sequence belongs to the methyltransferase superfamily. METL family. In terms of assembly, monomer. Interacts with SARS1/SerRS; interaction is mediated via tRNA(Ser) and is required for N(3)-methylcytidine methylation.

The protein resides in the cytoplasm. It is found in the nucleus. It catalyses the reaction cytidine(32) in tRNA(Ser) + S-adenosyl-L-methionine = N(3)-methylcytidine(32) in tRNA(Ser) + S-adenosyl-L-homocysteine + H(+). In terms of biological role, S-adenosyl-L-methionine-dependent methyltransferase that mediates N(3)-methylcytidine modification of residue 32 of the tRNA anticodon loop of tRNA(Ser), including tRNA(Ser)(UGA) and tRNA(Ser)(GCU). Interaction with SARS1/SerRS is required for N(3)-methylcytidine methylation. The chain is tRNA N(3)-cytidine methyltransferase METTL6 (Mettl6) from Rattus norvegicus (Rat).